The chain runs to 115 residues: NADH-ubiquinone oxidoreductase chain 3 (115 aa).

Helical transmembrane passes span 4–24 (ALTL…AFWL), 55–75 (FFLV…LLPL), and 84–104 (LTTM…SLAY).

This sequence belongs to the complex I subunit 3 family. Core subunit of respiratory chain NADH dehydrogenase (Complex I) which is composed of 45 different subunits. Interacts with TMEM186. Interacts with TMEM242.

The protein resides in the mitochondrion inner membrane. The catalysed reaction is a ubiquinone + NADH + 5 H(+)(in) = a ubiquinol + NAD(+) + 4 H(+)(out). Core subunit of the mitochondrial membrane respiratory chain NADH dehydrogenase (Complex I) which catalyzes electron transfer from NADH through the respiratory chain, using ubiquinone as an electron acceptor. Essential for the catalytic activity of complex I. This chain is NADH-ubiquinone oxidoreductase chain 3, found in Halichoerus grypus (Gray seal).